Consider the following 91-residue polypeptide: Small ribosomal subunit protein uS15 (91 aa).

This sequence belongs to the universal ribosomal protein uS15 family. As to quaternary structure, part of the 30S ribosomal subunit. Forms a bridge to the 50S subunit in the 70S ribosome, contacting the 23S rRNA.

Functionally, one of the primary rRNA binding proteins, it binds directly to 16S rRNA where it helps nucleate assembly of the platform of the 30S subunit by binding and bridging several RNA helices of the 16S rRNA. Its function is as follows. Forms an intersubunit bridge (bridge B4) with the 23S rRNA of the 50S subunit in the ribosome. This Sulfurimonas denitrificans (strain ATCC 33889 / DSM 1251) (Thiomicrospira denitrificans (strain ATCC 33889 / DSM 1251)) protein is Small ribosomal subunit protein uS15.